The chain runs to 314 residues: Fumarylacetoacetate hydrolase domain-containing protein 2 (314 aa).

The a divalent metal cation site is built by Glu159, Glu161, and Asp190. The residue at position 203 (Lys203) is an N6-acetyllysine; alternate. N6-succinyllysine; alternate is present on Lys203. Residue Lys234 is modified to N6-acetyllysine.

It belongs to the FAH family. The cofactor is Ca(2+). Mg(2+) is required as a cofactor.

Its function is as follows. May have hydrolase activity. In Pongo abelii (Sumatran orangutan), this protein is Fumarylacetoacetate hydrolase domain-containing protein 2 (FAHD2).